The primary structure comprises 90 residues: Alpha-latrotoxin associated low molecular weight protein (90 aa).

An N-terminal signal peptide occupies residues 1-18 (MNKLFFVVFLCLIISVLA).

Belongs to the arthropod CHH/MIH/GIH/VIH hormone family. As to expression, expressed by the venom gland.

The protein resides in the secreted. Its function is as follows. May increase the toxicity of alpha-latrotoxin and/or other venom components. Is non-toxic to mice and to the cockroach Periplaneta americana. The chain is Alpha-latrotoxin associated low molecular weight protein from Latrodectus geometricus (Brown widow spider).